The primary structure comprises 308 residues: UDP-N-acetylenolpyruvoylglucosamine reductase (308 aa).

Residues 32–196 (VGGPAARLYK…ISAKLQLSPG (165 aa)) enclose the FAD-binding PCMH-type domain. Residue R176 is part of the active site. The active-site Proton donor is the S225. The active site involves E296.

Belongs to the MurB family. The cofactor is FAD.

Its subcellular location is the cytoplasm. It catalyses the reaction UDP-N-acetyl-alpha-D-muramate + NADP(+) = UDP-N-acetyl-3-O-(1-carboxyvinyl)-alpha-D-glucosamine + NADPH + H(+). It functions in the pathway cell wall biogenesis; peptidoglycan biosynthesis. Its function is as follows. Cell wall formation. This is UDP-N-acetylenolpyruvoylglucosamine reductase from Legionella pneumophila subsp. pneumophila (strain Philadelphia 1 / ATCC 33152 / DSM 7513).